Reading from the N-terminus, the 348-residue chain is Protein RecA (348 aa).

66 to 73 is an ATP binding site; it reads GPESSGKT.

It belongs to the RecA family.

The protein localises to the cytoplasm. In terms of biological role, can catalyze the hydrolysis of ATP in the presence of single-stranded DNA, the ATP-dependent uptake of single-stranded DNA by duplex DNA, and the ATP-dependent hybridization of homologous single-stranded DNAs. It interacts with LexA causing its activation and leading to its autocatalytic cleavage. The protein is Protein RecA of Neisseria meningitidis serogroup C / serotype 2a (strain ATCC 700532 / DSM 15464 / FAM18).